The primary structure comprises 309 residues: Probable ABC transporter permease protein y4oQ (309 aa).

The next 7 helical transmembrane spans lie at 25-45 (VVWFTMPAAAIMLLVLGVPLV), 89-109 (LIYAVVAVSLECALGILFAVL), 123-143 (LMLIPMVITPAVVGIFWKLLY), 174-194 (VIIVDVWQSTPFFTLIILAGL), 221-241 (LPHLVPYIMIAAAFRIIGVMA), 246-266 (IFLLTLGGPGNVTTTLSVYAY), and 278-298 (TTAISWIYVVFVLAISAPLIW). The ABC transmembrane type-1 domain occupies 85–296 (IRVTLIYAVV…VFVLAISAPL (212 aa)).

The protein belongs to the binding-protein-dependent transport system permease family. MalFG subfamily.

The protein localises to the cell inner membrane. Probably part of the binding-protein-dependent transport system y4oPQRS. This system probably transports a sugar-like molecule. Probably responsible for the translocation of the substrate across the membrane. In Sinorhizobium fredii (strain NBRC 101917 / NGR234), this protein is Probable ABC transporter permease protein y4oQ.